Here is a 299-residue protein sequence, read N- to C-terminus: Glutamyl-Q tRNA(Asp) synthetase (299 aa).

L-glutamate contacts are provided by residues 9-13 (RFAPS) and Glu45. A 'HIGH' region motif is present at residues 12–22 (PSPTGPLHFGS). Residues Cys101, Cys103, and Cys118 each coordinate Zn(2+). Tyr170 and Arg188 together coordinate L-glutamate. The 'KMSKS' region motif lies at 226-230 (KLSKS). Lys229 serves as a coordination point for ATP. Positions 279–299 (QLLPRQRQRDRATCAYERQRD) are disordered. Residues 285–299 (RQRDRATCAYERQRD) are compositionally biased toward basic and acidic residues.

It belongs to the class-I aminoacyl-tRNA synthetase family. GluQ subfamily. Zn(2+) serves as cofactor.

Functionally, catalyzes the tRNA-independent activation of glutamate in presence of ATP and the subsequent transfer of glutamate onto a tRNA(Asp). Glutamate is transferred on the 2-amino-5-(4,5-dihydroxy-2-cyclopenten-1-yl) moiety of the queuosine in the wobble position of the QUC anticodon. The sequence is that of Glutamyl-Q tRNA(Asp) synthetase from Xanthomonas oryzae pv. oryzae (strain KACC10331 / KXO85).